The primary structure comprises 375 residues: Mitogen-activated protein kinase 4a (375 aa).

The Protein kinase domain occupies 39 to 325 (KPPLRPIGRG…VEAALAHPYL (287 aa)). Residues 45–53 (IGRGAYGIV) and lysine 68 contribute to the ATP site. Aspartate 165 (proton acceptor) is an active-site residue. Threonine 197 is subject to Phosphothreonine. Positions 197 to 199 (TEY) match the TXY motif. Tyrosine 199 carries the post-translational modification Phosphotyrosine.

Belongs to the protein kinase superfamily. CMGC Ser/Thr protein kinase family. MAP kinase subfamily. Requires Mg(2+) as cofactor. In terms of processing, dually phosphorylated on Thr-197 and Tyr-199, which activates the enzyme. Phosphorylated in response to pathogen-associated molecular pattern (PAMP) chitin and in response to necrotrophic fungus B.cinerea spores. Not phosphorylated in response to osmotic stress. In terms of tissue distribution, expressed strongly in the apical cells of caulonemal air filaments and rhizoids in fully developed plants and less strongly, but readily detectable in filamentous protonemal tissue at the edge of the plant consisting of both chloronema and caulonema. When filamentous growth of protonema is promoted, the expression is strongest in newly formed apical tip cells of protonemal tissue.

It localises to the cytoplasm. The protein resides in the nucleus. The enzyme catalyses L-seryl-[protein] + ATP = O-phospho-L-seryl-[protein] + ADP + H(+). The catalysed reaction is L-threonyl-[protein] + ATP = O-phospho-L-threonyl-[protein] + ADP + H(+). With respect to regulation, activated by threonine and tyrosine phosphorylation. Activated in response to bacterial and fungal pathogen-associated molecular patterns (PAMPs) including chitin, chitosan and peptidyl glycans (PGNs). Activation in response to chitin requires the CERK1, MEKK1a/b, MKK1a/b/c and MPK4a/b signaling pathway. Activated in response to necrotrophic fungus B.cinerea spores. Not activated in response to osmotic stress. Functionally, the CERK1, MEKK1a/b, MKK1a/b/c and MPK4a/b proteins are involved in pathogen defense. The pathway induces rapid growth inhibition, cell wall depositions and accumulation of defense-related transcripts. This protein is required for innate immunity triggered by pathogen-associated molecular patterns (PAMPs). Involved in resistance to necrotrophic fungi B.cinerea and A.brassicicola. Involved in the transduction of signals from chitosan perception to the activation of defense genes. This is Mitogen-activated protein kinase 4a (MPK4a) from Physcomitrium patens (Spreading-leaved earth moss).